A 354-amino-acid polypeptide reads, in one-letter code: UDP-N-acetylglucosamine--N-acetylmuramyl-(pentapeptide) pyrophosphoryl-undecaprenol N-acetylglucosamine transferase (354 aa).

UDP-N-acetyl-alpha-D-glucosamine contacts are provided by residues threonine 15–glycine 17, asparagine 127, arginine 163, serine 191, isoleucine 244, alanine 263–glutamate 268, and glutamine 288.

It belongs to the glycosyltransferase 28 family. MurG subfamily.

The protein localises to the cell inner membrane. It catalyses the reaction di-trans,octa-cis-undecaprenyl diphospho-N-acetyl-alpha-D-muramoyl-L-alanyl-D-glutamyl-meso-2,6-diaminopimeloyl-D-alanyl-D-alanine + UDP-N-acetyl-alpha-D-glucosamine = di-trans,octa-cis-undecaprenyl diphospho-[N-acetyl-alpha-D-glucosaminyl-(1-&gt;4)]-N-acetyl-alpha-D-muramoyl-L-alanyl-D-glutamyl-meso-2,6-diaminopimeloyl-D-alanyl-D-alanine + UDP + H(+). It functions in the pathway cell wall biogenesis; peptidoglycan biosynthesis. Cell wall formation. Catalyzes the transfer of a GlcNAc subunit on undecaprenyl-pyrophosphoryl-MurNAc-pentapeptide (lipid intermediate I) to form undecaprenyl-pyrophosphoryl-MurNAc-(pentapeptide)GlcNAc (lipid intermediate II). This is UDP-N-acetylglucosamine--N-acetylmuramyl-(pentapeptide) pyrophosphoryl-undecaprenol N-acetylglucosamine transferase from Aliivibrio fischeri (strain ATCC 700601 / ES114) (Vibrio fischeri).